Consider the following 160-residue polypeptide: MIP18 family protein F45G2.10 (160 aa).

Residues 1–32 form a disordered region; that stretch reads MGQERLDNANPTLFDSKPRHRPVTGTERDESV.

The protein belongs to the MIP18 family.

Functionally, may play a role in chromosome segregation through establishment of sister chromatid cohesion. In Caenorhabditis elegans, this protein is MIP18 family protein F45G2.10.